Here is a 410-residue protein sequence, read N- to C-terminus: MASTTVCSAARIRVASSQVLRSIANTRTYATTSPESSIPETKPTAKRTPTTFKDKLNKGPSFSDFIGGATEPPLSPDEAYALKTALVGPAGKKKEITRLPSWLKTPIPDSSSYKKIKNDLRGLNLHTVCEEARCPNISECWGGGSKAAATATIMLMGDTCTRGCRFCSVKTSRTPPPLDPHEPENTAEALSRWGLGYVVLTAVDRDDLVDGGARHFAETVRRIKGKAPNILVECLTGDFSGDMEMVSLMAESGMDVFAHNVETVEALTPFVRDRRASFQQSLSVLRGAKAANPELITKTSLMLGLGETKEQVLDALKQLRASQVDVVTFGQYMRPTKRHMAVHEYVRPDVFDMWKEKAMEMGFLYCASGPLVRSSYKAGEAFIENVLKKRAKERIGGAVEDSVKGKDVLL.

A mitochondrion-targeting transit peptide spans 1 to 29 (MASTTVCSAARIRVASSQVLRSIANTRTY). Residues 29–39 (YATTSPESSIP) are compositionally biased toward polar residues. Positions 29–49 (YATTSPESSIPETKPTAKRTP) are disordered. Residues Cys-129, Cys-134, Cys-140, Cys-160, Cys-164, Cys-167, and Ser-375 each coordinate [4Fe-4S] cluster. The 222-residue stretch at 143–364 (GGSKAAATAT…KEKAMEMGFL (222 aa)) folds into the Radical SAM core domain.

This sequence belongs to the radical SAM superfamily. Lipoyl synthase family. [4Fe-4S] cluster is required as a cofactor.

Its subcellular location is the mitochondrion. It catalyses the reaction [[Fe-S] cluster scaffold protein carrying a second [4Fe-4S](2+) cluster] + N(6)-octanoyl-L-lysyl-[protein] + 2 oxidized [2Fe-2S]-[ferredoxin] + 2 S-adenosyl-L-methionine + 4 H(+) = [[Fe-S] cluster scaffold protein] + N(6)-[(R)-dihydrolipoyl]-L-lysyl-[protein] + 4 Fe(3+) + 2 hydrogen sulfide + 2 5'-deoxyadenosine + 2 L-methionine + 2 reduced [2Fe-2S]-[ferredoxin]. Its pathway is protein modification; protein lipoylation via endogenous pathway; protein N(6)-(lipoyl)lysine from octanoyl-[acyl-carrier-protein]: step 2/2. Catalyzes the radical-mediated insertion of two sulfur atoms into the C-6 and C-8 positions of the octanoyl moiety bound to the lipoyl domains of lipoate-dependent enzymes, thereby converting the octanoylated domains into lipoylated derivatives. The chain is Lipoyl synthase, mitochondrial from Arthroderma otae (strain ATCC MYA-4605 / CBS 113480) (Microsporum canis).